A 382-amino-acid chain; its full sequence is 2-epi-valiolone synthase (382 aa).

Residues 92–95 (EKSK), 124–128 (GVVVD), 148–149 (TT), K161, K170, and 188–191 (HLRT) contribute to the NAD(+) site. Zn(2+) is bound by residues E203, H266, and H283.

Belongs to the sugar phosphate cyclases superfamily. EVS family. It depends on NAD(+) as a cofactor. Requires Co(2+) as cofactor. The cofactor is Zn(2+).

It catalyses the reaction D-sedoheptulose 7-phosphate = 2-epi-valiolone + phosphate. Catalyzes the conversion of sedoheptulose 7-phosphate to 2-epi-valiolone, which may serve as an alternative precursor for aminocyclitol biosynthesis. The sequence is that of 2-epi-valiolone synthase from Actinosynnema mirum (strain ATCC 29888 / DSM 43827 / JCM 3225 / NBRC 14064 / NCIMB 13271 / NRRL B-12336 / IMRU 3971 / 101).